Reading from the N-terminus, the 369-residue chain is Serpentine receptor class epsilon-2 (369 aa).

At 1-20 the chain is on the extracellular side; that stretch reads MLIQYHKISNNDPNRIQLLS. A helical transmembrane segment spans residues 21-41; it reads MIFCEIILLIFELFEFAAIIF. Residues 42–55 lie on the Cytoplasmic side of the membrane; that stretch reads NMSRYQFHFNLKVV. The chain crosses the membrane as a helical span at residues 56–76; it reads VGYAIFAYWFDIIARITIAFF. The Extracellular portion of the chain corresponds to 77–118; that stretch reads EIGLFNLDDQTIAVETEKLPWNYKNMFFMLLFCCSTYRVYFM. A helical transmembrane segment spans residues 119 to 139; it reads FLICSVTLLLAVERFLATIWV. Topologically, residues 140–148 are cytoplasmic; that stretch reads STYESVQHK. A helical transmembrane segment spans residues 149–169; the sequence is WVSIVLTSTNSIAGIFGSLLF. The Extracellular portion of the chain corresponds to 170-178; sequence HYELIFDTA. Residues 179–199 traverse the membrane as a helical segment; sequence VWCSLGLCFNFVSIFLYVILF. Residues 200-234 lie on the Cytoplasmic side of the membrane; the sequence is NSNKSKIELCQTREITQSYTLSLRFQLNENLKIMN. A helical membrane pass occupies residues 235-255; it reads WIKNSILVVTCFNTLLAGFLI. Over 256-274 the chain is Extracellular; sequence ASNNEYLKNDYPVLVKCCH. A helical membrane pass occupies residues 275–295; sequence TFLNLGIAIYAQVVFFVAILA. Over 296 to 369 the chain is Cytoplasmic; that stretch reads DRHFRTYFLR…VAKKKRFWRV (74 aa).

It belongs to the nematode receptor-like protein sre family.

It is found in the cell membrane. The polypeptide is Serpentine receptor class epsilon-2 (sre-2) (Caenorhabditis elegans).